A 166-amino-acid polypeptide reads, in one-letter code: Photosystem I assembly protein Ycf3 (166 aa).

TPR repeat units lie at residues 35–68 (AFVY…EVDP), 72–105 (SFIF…NPSL), and 120–153 (GEQA…APLN).

This sequence belongs to the Ycf3 family.

The protein localises to the plastid. The protein resides in the chloroplast thylakoid membrane. Essential for the assembly of the photosystem I (PSI) complex. May act as a chaperone-like factor to guide the assembly of the PSI subunits. The chain is Photosystem I assembly protein Ycf3 from Ostreococcus tauri.